The following is a 181-amino-acid chain: tRNA-splicing endonuclease (181 aa).

Residues Y118, H126, and K157 contribute to the active site.

It belongs to the tRNA-intron endonuclease family. Archaeal short subfamily. Homotetramer; although the tetramer contains four active sites, only two participate in the cleavage. Therefore, it should be considered as a dimer of dimers.

It carries out the reaction pretRNA = a 3'-half-tRNA molecule with a 5'-OH end + a 5'-half-tRNA molecule with a 2',3'-cyclic phosphate end + an intron with a 2',3'-cyclic phosphate and a 5'-hydroxyl terminus.. Functionally, endonuclease that removes tRNA introns. Cleaves pre-tRNA at the 5'- and 3'-splice sites to release the intron. The products are an intron and two tRNA half-molecules bearing 2',3' cyclic phosphate and 5'-OH termini. Recognizes a pseudosymmetric substrate in which 2 bulged loops of 3 bases are separated by a stem of 4 bp. This is tRNA-splicing endonuclease from Sulfolobus acidocaldarius (strain ATCC 33909 / DSM 639 / JCM 8929 / NBRC 15157 / NCIMB 11770).